The chain runs to 233 residues: Cysteine-rich venom protein (233 aa).

The N-terminal stretch at 1-12 (PILAAVLQQSSG) is a signal peptide. The SCP domain maps to 31–159 (VDLHNSLRRS…PYSYFFVCQY (129 aa)). 8 disulfide bridges follow: C68/C146, C85/C160, C141/C157, C179/C186, C182/C191, C195/C228, C204/C222, and C213/C226. In terms of domain architecture, ShKT spans 195–228 (CTRENKFTNCNTMVQQSSCQDNYMKTNCPASCFC).

It belongs to the CRISP family. In terms of tissue distribution, expressed by the venom gland.

It localises to the secreted. Functionally, blocks contraction of smooth muscle elicited by high potassium-induced depolarization, but does not block caffeine-stimulated contraction. May target voltage-gated calcium channels on smooth muscle. The protein is Cysteine-rich venom protein of Trimeresurus stejnegeri (Chinese green tree viper).